Reading from the N-terminus, the 499-residue chain is Lysine--tRNA ligase (499 aa).

Residues Glu-408 and Glu-415 each coordinate Mg(2+).

The protein belongs to the class-II aminoacyl-tRNA synthetase family. Homodimer. The cofactor is Mg(2+).

Its subcellular location is the cytoplasm. The enzyme catalyses tRNA(Lys) + L-lysine + ATP = L-lysyl-tRNA(Lys) + AMP + diphosphate. This chain is Lysine--tRNA ligase, found in Bacillus thuringiensis (strain Al Hakam).